We begin with the raw amino-acid sequence, 99 residues long: DASH complex subunit DAD1 (99 aa).

The interval 69–99 is disordered; it reads GMNHQTRENTRDENNKISSSDTEDENNNNKI. Over residues 73–83 the composition is skewed to basic and acidic residues; that stretch reads QTRENTRDENN. Residues 89–99 show a composition bias toward acidic residues; sequence DTEDENNNNKI.

It belongs to the DASH complex DAD1 family. As to quaternary structure, component of the DASH complex consisting of ASK1, DAD1, DAD2, DAD3, DAD4, DAM1, DUO1, HSK3, SPC19 and SPC34, with a stoichiometry of one copy of each subunit per complex. Multiple DASH complexes oligomerize to form a ring that encircles spindle microtubules and organizes the rod-like NDC80 complexes of the outer kinetochore. DASH complex oligomerization strengthens microtubule attachments. On cytoplasmic microtubules, DASH complexes appear to form patches instead of rings.

The protein resides in the chromosome. The protein localises to the centromere. Its subcellular location is the kinetochore. It localises to the cytoplasm. It is found in the cytoskeleton. The protein resides in the spindle. The protein localises to the nucleus. In terms of biological role, component of the DASH complex that connects microtubules with kinetochores and couples microtubule depolymerisation to chromosome movement; it is involved in retrieving kinetochores to the spindle poles before their re-orientation on the spindle in early mitosis and allows microtubule depolymerization to pull chromosomes apart and resist detachment during anaphase. Kinetochores, consisting of a centromere-associated inner segment and a microtubule-contacting outer segment, play a crucial role in chromosome segregation by mediating the physical connection between centromeric DNA and microtubules. Kinetochores also serve as an input point for the spindle assembly checkpoint, which delays anaphase until all chromosomes have bioriented on the mitotic spindle. The polypeptide is DASH complex subunit DAD1 (Candida albicans (strain SC5314 / ATCC MYA-2876) (Yeast)).